Reading from the N-terminus, the 116-residue chain is S-adenosylmethionine decarboxylase proenzyme (116 aa).

The Schiff-base intermediate with substrate; via pyruvic acid role is filled by Ser-63. Ser-63 bears the Pyruvic acid (Ser); by autocatalysis mark. Residue His-68 is the Proton acceptor; for processing activity of the active site. The active-site Proton donor; for catalytic activity is the Cys-83.

Belongs to the prokaryotic AdoMetDC family. Type 1 subfamily. Heterotetramer of two alpha and two beta chains arranged as a dimer of alpha/beta heterodimers. Pyruvate is required as a cofactor. In terms of processing, is synthesized initially as an inactive proenzyme. Formation of the active enzyme involves a self-maturation process in which the active site pyruvoyl group is generated from an internal serine residue via an autocatalytic post-translational modification. Two non-identical subunits are generated from the proenzyme in this reaction, and the pyruvate is formed at the N-terminus of the alpha chain, which is derived from the carboxyl end of the proenzyme. The post-translation cleavage follows an unusual pathway, termed non-hydrolytic serinolysis, in which the side chain hydroxyl group of the serine supplies its oxygen atom to form the C-terminus of the beta chain, while the remainder of the serine residue undergoes an oxidative deamination to produce ammonia and the pyruvoyl group blocking the N-terminus of the alpha chain.

It carries out the reaction S-adenosyl-L-methionine + H(+) = S-adenosyl 3-(methylsulfanyl)propylamine + CO2. The protein operates within amine and polyamine biosynthesis; S-adenosylmethioninamine biosynthesis; S-adenosylmethioninamine from S-adenosyl-L-methionine: step 1/1. Functionally, catalyzes the decarboxylation of S-adenosylmethionine to S-adenosylmethioninamine (dcAdoMet), the propylamine donor required for the synthesis of the polyamines spermine and spermidine from the diamine putrescine. The chain is S-adenosylmethionine decarboxylase proenzyme from Clostridium botulinum (strain 657 / Type Ba4).